Reading from the N-terminus, the 364-residue chain is MKFLKNVLEEGSKLEEFNELELSPEDKELLEYLQQTKAKITVVGCGGAGNNTITRLKMEGIEGAKTVAINTDAQQLIRTKADKKILIGKKLTRGLGAGGNPKIGEEAAKESAEEIKAAIQDSDMVFITCGLGGGTGTGSAPVVAEISKKIGALTVAVVTLPFVMEGKVRMKNAMEGLERLKQHTDTLVVIPNEKLFEIVPNMPLKLAFKVADEVLINAVKGLVELITKDGLINVDFADVKAVMNNGGLAMIGIGESDSEKRAKEAVSMALNSPLLDVDIDGATGALIHVMGPEDLTLEEAREVVATVSSRLDPNATIIWGATIDENLENTVRVLLVITGVQSRIEFTDTGLKRKKLELTGIPKI.

GTP contacts are provided by residues G47–A48, A97–G99, G134–G136, E165, R169, and D212.

It belongs to the FtsZ family. As to quaternary structure, homodimer. Polymerizes to form a dynamic ring structure in a strictly GTP-dependent manner. Interacts directly with several other division proteins.

It is found in the cytoplasm. In terms of biological role, essential cell division protein that forms a contractile ring structure (Z ring) at the future cell division site. The regulation of the ring assembly controls the timing and the location of cell division. One of the functions of the FtsZ ring is to recruit other cell division proteins to the septum to produce a new cell wall between the dividing cells. Binds GTP and shows GTPase activity. This Methanocaldococcus jannaschii (strain ATCC 43067 / DSM 2661 / JAL-1 / JCM 10045 / NBRC 100440) (Methanococcus jannaschii) protein is Cell division protein FtsZ 1.